The sequence spans 256 residues: PGL/p-HBAD biosynthesis glycosyltransferase Mb2981 (256 aa).

The protein belongs to the glycosyltransferase 2 family.

In terms of biological role, involved in glycosylation steps downstream of mono-O-methyl-glycosyl-p-hydroxybenzoic acid derivative (p-HBAD I) and 2-O-methyl-rhamnosyl-phenolphthiocerol dimycocerosate (mycoside B) during the p-hydroxybenzoic acid derivatives (p-HBAD) and glycosylated phenolphthiocerol dimycocerosates (PGL) biosynthesis. This is PGL/p-HBAD biosynthesis glycosyltransferase Mb2981 from Mycobacterium bovis (strain ATCC BAA-935 / AF2122/97).